Here is a 403-residue protein sequence, read N- to C-terminus: Mitochondrial intermembrane space import and assembly protein 40 (403 aa).

Residues 1 to 31 constitute a mitochondrion transit peptide; that stretch reads MLRNLVVRNACRNRPSIQVARGLCRHQTRRL. At 33–46 the chain is on the mitochondrial matrix side; sequence ASSPQFGRNSNQEK. Residues 47–66 traverse the membrane as a helical; Signal-anchor for type II membrane protein segment; the sequence is TAGFIMGILSMAGALYFIAP. Residues 67–403 lie on the Mitochondrial intermembrane side of the membrane; it reads NRKPLFASRK…KEPLNEESKP (337 aa). 5 stretches are compositionally biased toward basic and acidic residues: residues 75-84, 101-118, 147-168, 206-230, and 262-271; these read RKVESDKTAE, NNSK…KNDE, EDNK…KDDE, SEKK…KTTT, and EELRKQEEKQ. The segment at 75–292 is disordered; it reads RKVESDKTAE…GAYNPDTGEI (218 aa). 3 disulfide bridges follow: C296-C298, C307-C340, and C317-C330. The 45-residue stretch at 304-348 folds into the CHCH domain; the sequence is HGPCGEEFKSAFSCFVYSEAEPKGIDCVEKFQHMQDCFRKYPEHY. 2 consecutive short sequence motifs (cx9C motif) follow at residues 307–317 and 330–340; these read CGEEFKSAFSC and CVEKFQHMQDC. The interval 351–403 is disordered; it reads QLKETSDDEEPQDKVKVNTIESAPNVSSAKENAAKKAEQSDVKKEPLNEESKP. Residues 369-378 are compositionally biased toward polar residues; sequence TIESAPNVSS. Basic and acidic residues predominate over residues 382–403; that stretch reads NAAKKAEQSDVKKEPLNEESKP.

As to quaternary structure, monomer. Interacts with the FAD-linked sulfhydryl oxidase ERV1 and with the substrate proteins COX17, TIM9, and TIM13, forming transient intermolecular disulfide bridges. Interacts with FCJ1. Cu(2+) serves as cofactor. It depends on Zn(2+) as a cofactor.

The protein resides in the mitochondrion inner membrane. Its function is as follows. Required for the import and folding of small cysteine-containing proteins (small Tim) in the mitochondrial intermembrane space (IMS). Forms a redox cycle with ERV1 that involves a disulfide relay system. Precursor proteins to be imported into the IMS are translocated in their reduced form into the mitochondria. The oxidized form of MIA40 forms a transient intermolecular disulfide bridge with the reduced precursor protein, resulting in oxidation of the precursor protein that now contains an intramolecular disulfide bond and is able to undergo folding in the IMS. Reduced MIA40 is reoxidized by FAD-linked sulfhydryl oxidase ERV1. This chain is Mitochondrial intermembrane space import and assembly protein 40 (MIA40), found in Saccharomyces cerevisiae (strain ATCC 204508 / S288c) (Baker's yeast).